The chain runs to 122 residues: Large ribosomal subunit protein uL14 (122 aa).

Belongs to the universal ribosomal protein uL14 family. In terms of assembly, part of the 50S ribosomal subunit. Forms a cluster with proteins L3 and L19. In the 70S ribosome, L14 and L19 interact and together make contacts with the 16S rRNA in bridges B5 and B8.

In terms of biological role, binds to 23S rRNA. Forms part of two intersubunit bridges in the 70S ribosome. The sequence is that of Large ribosomal subunit protein uL14 from Desulforudis audaxviator (strain MP104C).